Consider the following 153-residue polypeptide: Bacteriohemerythrin (153 aa).

7 residues coordinate Fe cation: His21, His57, Glu61, His76, His80, His115, and Asp120.

Belongs to the hemerythrin family. In terms of assembly, monomer.

Its function is as follows. Oxygen-binding protein. May be involved in a storage mechanism or for delivery to oxygen-requiring enzymes. The oxygen-binding site contains two iron atoms. This Stenotrophomonas maltophilia (strain R551-3) protein is Bacteriohemerythrin.